The sequence spans 221 residues: Phosphoribosylformylglycinamidine synthase subunit PurQ (221 aa).

Positions Asn-2–Ala-221 constitute a Glutamine amidotransferase type-1 domain. The active-site Nucleophile is the Cys-86. Active-site residues include His-194 and Glu-196.

Part of the FGAM synthase complex composed of 1 PurL, 1 PurQ and 2 PurS subunits.

It localises to the cytoplasm. It catalyses the reaction N(2)-formyl-N(1)-(5-phospho-beta-D-ribosyl)glycinamide + L-glutamine + ATP + H2O = 2-formamido-N(1)-(5-O-phospho-beta-D-ribosyl)acetamidine + L-glutamate + ADP + phosphate + H(+). The enzyme catalyses L-glutamine + H2O = L-glutamate + NH4(+). Its pathway is purine metabolism; IMP biosynthesis via de novo pathway; 5-amino-1-(5-phospho-D-ribosyl)imidazole from N(2)-formyl-N(1)-(5-phospho-D-ribosyl)glycinamide: step 1/2. Its function is as follows. Part of the phosphoribosylformylglycinamidine synthase complex involved in the purines biosynthetic pathway. Catalyzes the ATP-dependent conversion of formylglycinamide ribonucleotide (FGAR) and glutamine to yield formylglycinamidine ribonucleotide (FGAM) and glutamate. The FGAM synthase complex is composed of three subunits. PurQ produces an ammonia molecule by converting glutamine to glutamate. PurL transfers the ammonia molecule to FGAR to form FGAM in an ATP-dependent manner. PurS interacts with PurQ and PurL and is thought to assist in the transfer of the ammonia molecule from PurQ to PurL. The chain is Phosphoribosylformylglycinamidine synthase subunit PurQ from Synechococcus sp. (strain ATCC 27144 / PCC 6301 / SAUG 1402/1) (Anacystis nidulans).